The sequence spans 65 residues: Large ribosomal subunit protein uL29 (65 aa).

Belongs to the universal ribosomal protein uL29 family.

In Acinetobacter baylyi (strain ATCC 33305 / BD413 / ADP1), this protein is Large ribosomal subunit protein uL29.